The sequence spans 119 residues: MTKQVKIYHNPRCSKSRETLNLLKENGVEPEVVLYLETPADAATLRDLLKILGMNSARELMRQKEDLYKELNLADSSLSEEALIQAMVDNPKLMERPIVVANGKARIGRPPEQVLEIVG.

Cysteine 13 is a catalytic residue.

Belongs to the ArsC family.

This is an uncharacterized protein from Escherichia coli (strain K12).